The primary structure comprises 1070 residues: MGAARGSPARPRRLPLLSVLLLPLLGGTQTAIVFIKQPSSQDALQGRRALLRCEVEAPGPVHVYWLLDGAPVQDTERRFAQGSSLSFAAVDRLQDSGTFQCVARDDVTGEEARSANASFNIKWIEAGPVVLKHPASEAEIQPQTQVTLRCHIDGHPRPTYQWFRDGTPLSDGQSNHTVSSKERNLTLRPAGPEHSGLYSCCAHSAFGQACSSQNFTLSIADESFARVVLAPQDVVVARYEEAMFHCQFSAQPPPSLQWLFEDETPITNRSRPPHLRRATVFANGSLLLTQVRPRNAGIYRCIGQGQRGPPIILEATLHLAEIEDMPLFEPRVFTAGSEERVTCLPPKGLPEPSVWWEHAGVRLPTHGRVYQKGHELVLANIAESDAGVYTCHAANLAGQRRQDVNITVATVPSWLKKPQDSQLEEGKPGYLDCLTQATPKPTVVWYRNQMLISEDSRFEVFKNGTLRINSVEVYDGTWYRCMSSTPAGSIEAQARVQVLEKLKFTPPPQPQQCMEFDKEATVPCSATGREKPTIKWERADGSSLPEWVTDNAGTLHFARVTRDDAGNYTCIASNGPQGQIRAHVQLTVAVFITFKVEPERTTVYQGHTALLQCEAQGDPKPLIQWKGKDRILDPTKLGPRMHIFQNGSLVIHDVAPEDSGRYTCIAGNSCNIKHTEAPLYVVDKPVPEESEGPGSPPPYKMIQTIGLSVGAAVAYIIAVLGLMFYCKKRCKAKRLQKQPEGEEPEMECLNGGPLQNGQPSAEIQEEVALTSLGSGPAATNKRHSTSDKMHFPRSSLQPITTLGKSEFGEVFLAKAQGLEEGVAETLVLVKSLQSKDEQQQLDFRRELEMFGKLNHANVVRLLGLCREAEPHYMVLEYVDLGDLKQFLRISKSKDEKLKSQPLSTKQKVALCTQVALGMEHLSNNRFVHKDLAARNCLVSAQRQVKVSALGLSKDVYNSEYYHFRQAWVPLRWMSPEAILEGDFSTKSDVWAFGVLMWEVFTHGEMPHGGQADDEVLADLQAGKARLPQPEGCPSKLYRLMQRCWALSPKDRPSFSEIASALGDSTVDSKP.

A signal peptide spans 1–30 (MGAARGSPARPRRLPLLSVLLLPLLGGTQT). 7 Ig-like C2-type domains span residues 31–120 (AIVF…ASFN), 128–218 (PVVL…FTLS), 225–317 (ARVV…EATL), 309–407 (PPII…VNIT), 412–497 (PSWL…ARVQ), 503–586 (KFTP…HVQL), and 578–680 (GQIR…APLY). The Extracellular segment spans residues 31–704 (AIVFIKQPSS…SPPPYKMIQT (674 aa)). Cysteine 53 and cysteine 101 form a disulfide bridge. 6 N-linked (GlcNAc...) asparagine glycosylation sites follow: asparagine 116, asparagine 175, asparagine 184, asparagine 214, asparagine 268, and asparagine 283. Cysteine 150 and cysteine 200 are joined by a disulfide. 2 disulfides stabilise this stretch: cysteine 246–cysteine 301 and cysteine 343–cysteine 391. N-linked (GlcNAc...) asparagine glycosylation is found at asparagine 405, asparagine 463, asparagine 567, and asparagine 646. Cystine bridges form between cysteine 433/cysteine 481, cysteine 524/cysteine 570, and cysteine 613/cysteine 664. Residues 705 to 725 (IGLSVGAAVAYIIAVLGLMFY) form a helical membrane-spanning segment. The Cytoplasmic segment spans residues 726-1070 (CKKRCKAKRL…LGDSTVDSKP (345 aa)). Disordered stretches follow at residues 736 to 759 (QKQPEGEEPEMECLNGGPLQNGQP) and 773 to 793 (GSGPAATNKRHSTSDKMHFPR). The segment at 794–1070 (SSLQPITTLG…LGDSTVDSKP (277 aa)) is interaction with CTNNB1. In terms of domain architecture, Protein kinase; inactive spans 796-1066 (LQPITTLGKS…IASALGDSTV (271 aa)). Serine 1064 bears the Phosphoserine mark.

Belongs to the protein kinase superfamily. Tyr protein kinase family. Insulin receptor subfamily. In terms of assembly, interacts with CTNNB1. MMP14 cleaves PTK7 between Pro-621 and Leu-622 generating an N-terminal soluble (70 kDa) fragment and a membrane C-terminal (50 kDa) fragment. Proteolysis by MMP14 regulates PTK7 function in non-canonical Wnt signaling pathway. Highly expressed in lung, liver, pancreas, kidney, placenta and melanocytes. Weakly expressed in thyroid gland, ovary, brain, heart and skeletal muscle. Also expressed in erythroleukemia cells. But not expressed in colon.

It localises to the membrane. It is found in the cell junction. Functionally, inactive tyrosine kinase involved in Wnt signaling pathway. Component of both the non-canonical (also known as the Wnt/planar cell polarity signaling) and the canonical Wnt signaling pathway. Functions in cell adhesion, cell migration, cell polarity, proliferation, actin cytoskeleton reorganization and apoptosis. Has a role in embryogenesis, epithelial tissue organization and angiogenesis. This is Inactive tyrosine-protein kinase 7 (PTK7) from Homo sapiens (Human).